The primary structure comprises 275 residues: Lacto-N-neotetraose biosynthesis glycosyltransferase LgtB (275 aa).

This sequence belongs to the glycosyltransferase 25 family.

It functions in the pathway glycan metabolism; lacto-N-neotetraose biosynthesis. The protein operates within bacterial outer membrane biogenesis; lipooligosaccharide biosynthesis. Adds the second galactose to the lacto-N-tetraose chain in lipooligosaccharide (LOS). This Neisseria meningitidis serogroup B (strain ATCC BAA-335 / MC58) protein is Lacto-N-neotetraose biosynthesis glycosyltransferase LgtB (lgtB).